The following is a 1019-amino-acid chain: Serine/threonine-protein kinase 31 (1019 aa).

The Tudor domain maps to 78-137 (NLDPNKIYGGLFSEDQCWYRCKVLKIISVEKCLVRYIDYGNTEILNRSDIVEIPLELQFS). The stretch at 298 to 355 (EKIKQDQKLIEENEKLKTEKDALLESYKALELKVEQIAQELQQEKAAAVDLTNHLEYT) forms a coiled coil. The region spanning 710-1019 (IGLLKYMNSG…TRNGEANFDC (310 aa)) is the Protein kinase domain. ATP-binding positions include 716–724 (MNSGGLLTM) and lysine 737.

This sequence belongs to the protein kinase superfamily. Ser/Thr protein kinase family. Testis specific.

It catalyses the reaction L-seryl-[protein] + ATP = O-phospho-L-seryl-[protein] + ADP + H(+). It carries out the reaction L-threonyl-[protein] + ATP = O-phospho-L-threonyl-[protein] + ADP + H(+). The polypeptide is Serine/threonine-protein kinase 31 (STK31) (Homo sapiens (Human)).